Reading from the N-terminus, the 230-residue chain is GTP cyclohydrolase III (230 aa).

Belongs to the archaeal-type GTP cyclohydrolase family.

The catalysed reaction is GTP + 3 H2O = 2-amino-5-formylamino-6-(5-phospho-D-ribosylamino)pyrimidin-4(3H)-one + 2 phosphate + 2 H(+). Functionally, catalyzes the formation of 2-amino-5-formylamino-6-ribofuranosylamino-4(3H)-pyrimidinone ribonucleotide monophosphate and inorganic phosphate from GTP. Also has an independent pyrophosphate phosphohydrolase activity. This Saccharolobus islandicus (strain M.16.27) (Sulfolobus islandicus) protein is GTP cyclohydrolase III.